A 421-amino-acid chain; its full sequence is Synaptotagmin-1 (421 aa).

Topologically, residues 1–57 (MVSASRPEALAAPVTTVATLVPHNATEPASPGEGKEDAFSKLKQKFMNELHKIPLPP) are vesicular. Residue asparagine 24 is glycosylated (N-linked (GlcNAc...) asparagine). The chain crosses the membrane as a helical span at residues 58–79 (WALIAIAIVAVLLVVTCCFCVC). 5 S-palmitoyl cysteine lipidation sites follow: cysteine 74, cysteine 75, cysteine 77, cysteine 79, and cysteine 82. Topologically, residues 80–421 (KKCLFKKKNK…EVDAMLAVKK (342 aa)) are cytoplasmic. The disordered stretch occupies residues 112-141 (TMKDQALKDDDAETGLTDGEEKEEPKEEEK). Acidic residues predominate over residues 121–133 (DDAETGLTDGEEK). Position 128 is a phosphothreonine (threonine 128). Residues 135–381 (EPKEEEKLGK…AIGKVFVGYN (247 aa)) form a phospholipid binding region. The region spanning 141–260 (KLGKLQYSLD…DFGHVTEEWR (120 aa)) is the C2 1 domain. The Ca(2+) site is built by leucine 171, aspartate 172, and aspartate 178. The residue at position 229 (tyrosine 229) is a Phosphotyrosine. Aspartate 230, phenylalanine 231, aspartate 232, serine 235, lysine 236, and aspartate 238 together coordinate Ca(2+). Serine 264 is subject to Phosphoserine. Positions 272-405 (KLGDICFSLR…NPRRPIAQWH (134 aa)) constitute a C2 2 domain. The Ca(2+) site is built by aspartate 303 and aspartate 309. Phosphoserine is present on residues serine 342 and serine 344. The Ca(2+) site is built by aspartate 363, aspartate 365, and aspartate 371.

The protein belongs to the synaptotagmin family. As to quaternary structure, homotetramer. Heterodimer; heterodimerizes with SYT2 in presence of calcium. Interacts with SCAMP5. Interacts with STON2. Forms a complex with SV2B, syntaxin 1 and SNAP25. Interacts with SV2A, SV2B and SV2C. Interacts with RIMS1. Interacts with PRRT2. Interacts with DNAJC5 in a phosphorylation-dependent manner. Interacts (via N-terminus) with RAB3A. Interacts with SYT12. Interacts with calmodulin. Interacts with DNM1 (via C-terminal proline-rich domain (PRD)); this interaction facilitates vesicle fission during clathrin-mediated endocytosis (CME). Ca(2+) is required as a cofactor. Glycosylated. In terms of tissue distribution, expressed in the brain and adrenal medulla (at protein level).

Its subcellular location is the cytoplasmic vesicle. It localises to the secretory vesicle membrane. The protein localises to the secretory vesicle. It is found in the synaptic vesicle membrane. The protein resides in the chromaffin granule membrane. Its subcellular location is the cytoplasm. Functionally, calcium sensor that participates in triggering neurotransmitter release at the synapse. May have a regulatory role in the membrane interactions during trafficking of synaptic vesicles at the active zone of the synapse. It binds acidic phospholipids with a specificity that requires the presence of both an acidic head group and a diacyl backbone. A Ca(2+)-dependent interaction between synaptotagmin and putative receptors for activated protein kinase C has also been reported. It can bind to at least three additional proteins in a Ca(2+)-independent manner; these are neurexins, syntaxin and AP2. Plays a role in dendrite formation by melanocytes. The polypeptide is Synaptotagmin-1 (Mus musculus (Mouse)).